We begin with the raw amino-acid sequence, 162 residues long: Regulator of sigma D (162 aa).

The protein belongs to the Rsd/AlgQ family. Interacts with RpoD.

The protein resides in the cytoplasm. Functionally, binds RpoD and negatively regulates RpoD-mediated transcription activation by preventing the interaction between the primary sigma factor RpoD with the catalytic core of the RNA polymerase and with promoter DNA. May be involved in replacement of the RNA polymerase sigma subunit from RpoD to RpoS during the transition from exponential growth to the stationary phase. The chain is Regulator of sigma D from Salmonella arizonae (strain ATCC BAA-731 / CDC346-86 / RSK2980).